The chain runs to 573 residues: Glutamate--tRNA ligase (573 aa).

Residues 106–116 (PNPDGAFHLGN) carry the 'HIGH' region motif.

It belongs to the class-I aminoacyl-tRNA synthetase family. Glutamate--tRNA ligase type 2 subfamily.

The protein localises to the cytoplasm. The enzyme catalyses tRNA(Glu) + L-glutamate + ATP = L-glutamyl-tRNA(Glu) + AMP + diphosphate. Its function is as follows. Catalyzes the attachment of glutamate to tRNA(Glu) in a two-step reaction: glutamate is first activated by ATP to form Glu-AMP and then transferred to the acceptor end of tRNA(Glu). This Thermococcus onnurineus (strain NA1) protein is Glutamate--tRNA ligase.